Consider the following 54-residue polypeptide: Photoreceptor disk component PRCD (54 aa).

A lipid anchor (S-palmitoyl cysteine) is attached at cysteine 2. Residues 24-54 are disordered; the sequence is QPEPSGADGAVVGSRSERDLQSSGRKEEPLK. Basic and acidic residues predominate over residues 38 to 54; sequence RSERDLQSSGRKEEPLK.

Belongs to the PRCD family. In terms of assembly, interacts with RHO/rhodopsin; the interaction promotes PRCD stability. In terms of processing, palmitoylated at Cys-2. Palmitoylation is essential for protein stability and trafficking to the photoreceptor outer segment, but does not appear to be essential for membrane localization. Probably palmitoylated by ZDHHC3. Post-translationally, phosphorylated. As to expression, expressed in retina.

The protein localises to the cell projection. It is found in the cilium. It localises to the photoreceptor outer segment. Its subcellular location is the membrane. The protein resides in the endoplasmic reticulum. The protein localises to the golgi apparatus. In terms of biological role, involved in vision. The chain is Photoreceptor disk component PRCD from Canis lupus familiaris (Dog).